Consider the following 249-residue polypeptide: Vesicle-associated membrane protein-associated protein A (249 aa).

An N-acetylalanine modification is found at alanine 2. The Cytoplasmic portion of the chain corresponds to 2 to 227; sequence ASASGAMAKH…ASFRDNVTSP (226 aa). Residues 14 to 131 form the MSP domain; the sequence is ILVLDPPTDL…MDSKLRCVFE (118 aa). The segment at 50-53 is phosphorylated FFAT motif binding; sequence KVKT. Lysine 125 is modified (N6-acetyllysine). The span at 135 to 144 shows a compositional bias: basic and acidic residues; the sequence is ENDKLNDMEP. The disordered stretch occupies residues 135-167; that stretch reads ENDKLNDMEPSKAVPLNASKQDGPMPKPHSVSL. At serine 166 the chain carries Phosphoserine. The stretch at 169-205 forms a coiled coil; that stretch reads DTETRKLMEECKRLQGEMMKLSEENRHLRDEGLRLRK. Phosphothreonine is present on threonine 170. 3 positions are modified to phosphoserine: serine 214, serine 216, and serine 219. Residues 228 to 248 form a helical; Anchor for type IV membrane protein membrane-spanning segment; sequence LPSLLVVIAAIFIGFFLGKFI.

The protein belongs to the VAMP-associated protein (VAP) (TC 9.B.17) family. Homodimer; disulfide-linked. Heterodimer with VAPB. Interacts with VAMP1, VAMP2, STX1A, BET1, SEC22C and with the C-terminal domain of OCLN. Interacts (via MSP domain) with OSBPL1A (via FFAT motif). Interacts (via MSP domain) with ZFYVE27; may retain ZFYVE27 in the endoplasmic reticulum and regulate its function in cell projections formation. Interacts with OSBP. Interacts (via C-terminus) with RSAD2/viperin (via C-terminus). Interacts with IFITM3. Interacts with OSBPL3 (phosphorylated form). Interacts with KIF5A in a ZFYVE27-dependent manner. Interacts (via MSP domain) with STARD3 (via phosphorylated FFAT motif); this interaction recruits VAPA to the endosome. Interacts with STARD3NL (via FFAT motif). Interacts with CERT1. Interacts with PLEKHA3 and SACM1L to form a ternary complex. Interacts with VPS13A (via FFAT motif). Interacts with RB1CC1 (via phosphorylated FFAT motif), MIGA2 (via phosphorylated FFAT motif), RMDN3 (via phosphorylated FFAT motif), KCNB1 (via phosphorylated FFAT motif) and KCNB2 (via phosphorylated FFAT motif). Interacts (via MSP domain) with WDR44 (via FFAT-like motif); the interactions connect the endoplasmic reticulum (ER) with the endosomal tubule. In terms of assembly, (Microbial infection) Interacts with HCV protein NS5A and NS5B. Ubiquitous.

The protein resides in the endoplasmic reticulum membrane. It is found in the cell membrane. It localises to the cell junction. The protein localises to the tight junction. Its subcellular location is the nucleus membrane. Endoplasmic reticulum (ER)-anchored protein that mediates the formation of contact sites between the ER and endosomes via interaction with FFAT motif-containing proteins such as STARD3 or WDR44. STARD3-VAPA interaction enables cholesterol transfer from the ER to endosomes. Via interaction with WDR44 participates in neosynthesized protein export. In addition, recruited to the plasma membrane through OSBPL3 binding. The OSBPL3-VAPA complex stimulates RRAS signaling which in turn attenuates integrin beta-1 (ITGB1) activation at the cell surface. With OSBPL3, may regulate ER morphology. May play a role in vesicle trafficking. The sequence is that of Vesicle-associated membrane protein-associated protein A from Homo sapiens (Human).